The primary structure comprises 466 residues: Replicative helicase loading/DNA remodeling protein DnaB (466 aa).

The interval 3-113 (RQAFEFGLRP…ETQFVYQLIQ (111 aa)) is DDBH1. The DDBH2-1 stretch occupies residues 200 to 292 (EMLRQMLGKH…TSSSAGKSSE (93 aa)). The segment at 293–401 (VNPKPQSDEW…QPKNEGSSGN (109 aa)) is DDBH2-2.

This sequence belongs to the DnaB/DnaD family. Homotetramer, higher-order oligomers are induced by ssDNA. The DNA replisome assembles sequentially on oriC in this order; DnaA, DnaD, DnaB, DnaI-DnaC helicase. Part of the replication restart primosome, PriA binds first, then DnaD and subsequently DnaB bind.

Helps DnaI load the DnaC replicative helicase onto single-stranded (ss)DNA. During DNA replication from the origin of replication (oriC) in the DNA replisome, DnaB and DnaD are required after DnaA and before subsequent helicase DnaC loading. Component of the replication restart primosome, which reloads the replicative helicase on sites other than oriC. Essential for replication initiation of the chromosome and plasmids. Remodels DNA, laterally compacts supercoiled plasmid and linear DNA. Binds supercoiled, nicked and linear double-stranded (ds)DNA and phage phiX174 single-stranded (ss)DNA; phiX174 ssDNA is a better substrate than for B.subtilis. No binding to phage M13 ssDNA although it induces oligomers. The protein is Replicative helicase loading/DNA remodeling protein DnaB of Staphylococcus aureus (strain NCTC 8325 / PS 47).